Consider the following 337-residue polypeptide: DNA replication regulator sld2 (337 aa).

A phosphothreonine; by cdc2 mark is found at Thr60 and Thr74. The disordered stretch occupies residues 71-97 (KFQTPTKQRAETEANESPKAPRNDYLQ). Ser87 bears the Phosphoserine; by cdc2 mark. Thr99 and Thr154 each carry phosphothreonine; by cdc2. Position 183 is a phosphoserine (Ser183). The segment at 258–302 (SMNLSKSHLEGLPEIDEDAENGIDDNEDTTASKDSSPFLDLQSER) is disordered. The segment covering 270 to 285 (PEIDEDAENGIDDNED) has biased composition (acidic residues).

The protein belongs to the SLD2 family. Interacts with rad4. Post-translationally, phosphorylated by cdc2 at the onset of S-phase.

It is found in the cytoplasm. It localises to the nucleus. In terms of biological role, has a role in the initiation of DNA replication. Required at S-phase checkpoint. The sequence is that of DNA replication regulator sld2 (drc1) from Schizosaccharomyces pombe (strain 972 / ATCC 24843) (Fission yeast).